The chain runs to 115 residues: NADH-ubiquinone oxidoreductase chain 3 (115 aa).

The next 3 membrane-spanning stretches (helical) occupy residues L4 to L24, F55 to L75, and M87 to M107.

The protein belongs to the complex I subunit 3 family. In terms of assembly, core subunit of respiratory chain NADH dehydrogenase (Complex I) which is composed of 45 different subunits. Interacts with TMEM186. Interacts with TMEM242.

It is found in the mitochondrion inner membrane. The catalysed reaction is a ubiquinone + NADH + 5 H(+)(in) = a ubiquinol + NAD(+) + 4 H(+)(out). Functionally, core subunit of the mitochondrial membrane respiratory chain NADH dehydrogenase (Complex I) which catalyzes electron transfer from NADH through the respiratory chain, using ubiquinone as an electron acceptor. Essential for the catalytic activity of complex I. This Habromys lophurus (Crested-tailed deer mouse) protein is NADH-ubiquinone oxidoreductase chain 3.